The following is an 84-amino-acid chain: Toxin NvePTx1 (84 aa).

Residues M1–A21 form the signal peptide. Residues S22–R34 constitute a propeptide that is removed on maturation.

It belongs to the sea anemone type 5 potassium channel toxin family. In terms of processing, contains 4 disulfide bonds. In unfertilized eggs and early post-fertilization stages, is expressed uniformly. In gastrulae, the expression becomes spatially-localized and seems to be absent from the oral and aboral poles. In planulae, the expression is clearly observed in the ectoderm in packed gland cells absent from the two body poles, and upon metamorphosis, the expression diminishes. There is two types of gland cells, one large and elongated and another small and round. This toxin is maternally deposited at both protein and RNA levels.

Its subcellular location is the secreted. The protein localises to the nematocyst. Neurotoxin that is probably only defensive. Acts as a voltage-gated potassium channel (Kv) inhibitor. In vivo, induces a rapid increase in swimming speed on zebrafish larvae, as well as death which occurs between 2 and 18 hours later. This is Toxin NvePTx1 from Nematostella vectensis (Starlet sea anemone).